The primary structure comprises 663 residues: 72 kDa type IV collagenase (663 aa).

An N-terminal signal peptide occupies residues 1–26; it reads MKTHSVFGFFFKVLLIQVYLFNKTLA. A propeptide spans 27–106 (activation peptide); the sequence is APSPIIKFPG…PRCGNPDVAN (80 aa). The Cysteine switch signature appears at 97–104; it reads PRCGNPDV. Cys99 serves as a coordination point for Zn(2+). The interval 107 to 218 is collagenase-like 1; the sequence is YNFFPRKPKW…LWTLGEGQVV (112 aa). Residues Asp131 and Asp165 each contribute to the Ca(2+) site. Residues His175 and Asp177 each coordinate Zn(2+). Ca(2+) is bound by residues Asp182 and Gly183. His190 contacts Zn(2+). Positions 197, 199, and 201 each coordinate Ca(2+). His203 lines the Zn(2+) pocket. Positions 205, 206, and 208 each coordinate Ca(2+). The segment at 219 to 393 is collagen-binding; the sequence is RVKYGNADGE…WGFCPDQGYS (175 aa). Fibronectin type-II domains are found at residues 225–273, 283–331, and 341–389; these read ADGE…FCPH, GDGQ…FCPE, and SEGA…FCPD. Intrachain disulfides connect Cys230–Cys256, Cys244–Cys271, Cys288–Cys314, Cys302–Cys329, Cys346–Cys372, and Cys360–Cys387. The interval 394–468 is collagenase-like 2; the sequence is LFLVAAHEFG…GPRPTLGPVT (75 aa). Residue His400 coordinates Zn(2+). The active site involves Glu401. 2 residues coordinate Zn(2+): His404 and His410. Positions 445–464 are disordered; sequence SPDVEPGPGPGPGPGPRPTL. Positions 449-463 are enriched in pro residues; the sequence is EPGPGPGPGPGPRPT. Cys472 and Cys663 form a disulfide bridge. 4 Hemopexin repeats span residues 475-519, 520-566, 568-616, and 617-663; these read DIVF…WPDL, PEKI…GLPP, VQRI…WNGV, and PDNL…WLGC. Residues Asp479, Asp524, Asp572, and Asp621 each contribute to the Ca(2+) site.

Belongs to the peptidase M10A family. Ligand for integrin alpha-V/beta-3. It depends on Ca(2+) as a cofactor. Zn(2+) is required as a cofactor. In terms of processing, the propeptide is processed by MMP14 (MT-MMP1) and MMP16 (MT-MMP3). As to expression, produced by normal skin fibroblasts.

It localises to the secreted. The protein localises to the extracellular space. Its subcellular location is the extracellular matrix. The catalysed reaction is Cleavage of gelatin type I and collagen types IV, V, VII, X. Cleaves the collagen-like sequence Pro-Gln-Gly-|-Ile-Ala-Gly-Gln.. The sequence is that of 72 kDa type IV collagenase (MMP2) from Gallus gallus (Chicken).